Here is a 600-residue protein sequence, read N- to C-terminus: Aspartate--tRNA(Asp/Asn) ligase (600 aa).

Glu-174 is an L-aspartate binding site. The interval 198-201 is aspartate; the sequence is QLFK. Position 220 (Arg-220) interacts with L-aspartate. ATP contacts are provided by residues 220 to 222 and Gln-229; that span reads RDE. Position 457 (His-457) interacts with L-aspartate. Glu-491 is a binding site for ATP. L-aspartate is bound at residue Arg-498. 543–546 provides a ligand contact to ATP; that stretch reads GLDR.

It belongs to the class-II aminoacyl-tRNA synthetase family. Type 1 subfamily. In terms of assembly, homodimer.

It is found in the cytoplasm. The enzyme catalyses tRNA(Asx) + L-aspartate + ATP = L-aspartyl-tRNA(Asx) + AMP + diphosphate. In terms of biological role, aspartyl-tRNA synthetase with relaxed tRNA specificity since it is able to aspartylate not only its cognate tRNA(Asp) but also tRNA(Asn). Reaction proceeds in two steps: L-aspartate is first activated by ATP to form Asp-AMP and then transferred to the acceptor end of tRNA(Asp/Asn). In Burkholderia pseudomallei (strain 668), this protein is Aspartate--tRNA(Asp/Asn) ligase.